Reading from the N-terminus, the 215-residue chain is Large ribosomal subunit protein mL43 (215 aa).

This sequence belongs to the mitochondrion-specific ribosomal protein mL43 family. In terms of assembly, component of the mitochondrial large ribosomal subunit (mt-LSU). Mature mammalian 55S mitochondrial ribosomes consist of a small (28S) and a large (39S) subunit. The 28S small subunit contains a 12S ribosomal RNA (12S mt-rRNA) and 30 different proteins. The 39S large subunit contains a 16S rRNA (16S mt-rRNA), a copy of mitochondrial valine transfer RNA (mt-tRNA(Val)), which plays an integral structural role, and 52 different proteins. High relative levels in skeletal muscle and testis. Lower levels of expression in the heart, brain, placenta, lung, liver, kidney, pancreas, spleen, thymus, prostate, ovary, small intestine, colon and leukocytes. Expression is coregulated with TWNK.

It localises to the mitochondrion. This Homo sapiens (Human) protein is Large ribosomal subunit protein mL43 (MRPL43).